A 1314-amino-acid polypeptide reads, in one-letter code: E3 ubiquitin-protein ligase RNF123 (1314 aa).

An N-acetylalanine modification is found at Ala-2. The region spanning 74–254 (VDSEDNESQG…VAFNFGSRPL (181 aa)) is the B30.2/SPRY domain. The disordered stretch occupies residues 460 to 483 (HRSSRESRDGKEAREETTEERQRR). Basic and acidic residues predominate over residues 462 to 483 (SSRESRDGKEAREETTEERQRR). The residue at position 675 (Ser-675) is a Phosphoserine. Arg-683 carries the asymmetric dimethylarginine modification. The interaction with NFKB1 stretch occupies residues 968-974 (WILVRLW). Residues Cys-1254, Cys-1257, Cys-1269, His-1271, Cys-1274, Cys-1277, Cys-1288, and Cys-1291 each contribute to the Zn(2+) site. An RING-type zinc finger spans residues 1254 to 1292 (CPICYAHPISAVFQPCGHKSCKACINQHLMNNKDCFFCK).

Component of the KPC complex composed of RNF123/KPC1 and UBAC1/KPC2. Interacts with UBAC1 and CDKN1B via its N-terminal domain. Interacts with RIGI (via N-terminus) and IFIH1 (via N-terminus). In terms of processing, ubiquitinated, leading to its degradation. Deubiquitinated by USP19, thereby stimulating CDKN1B ubiquitin-dependent degradation.

The protein resides in the cytoplasm. The enzyme catalyses S-ubiquitinyl-[E2 ubiquitin-conjugating enzyme]-L-cysteine + [acceptor protein]-L-lysine = [E2 ubiquitin-conjugating enzyme]-L-cysteine + N(6)-ubiquitinyl-[acceptor protein]-L-lysine.. It participates in protein modification; protein ubiquitination. Its function is as follows. Catalytic subunit of the KPC complex that acts as E3 ubiquitin-protein ligase. Promotes the ubiquitination and proteasome-mediated degradation of CDKN1B which is the cyclin-dependent kinase inhibitor at the G0-G1 transition of the cell cycle. Also acts as a key regulator of the NF-kappa-B signaling by promoting maturation of the NFKB1 component of NF-kappa-B: acts by catalyzing ubiquitination of the NFKB1 p105 precursor, leading to limited proteasomal degradation of NFKB1 p105 and generation of the active NFKB1 p50 subunit. Functions also as an inhibitor of innate antiviral signaling mediated by RIGI and IFIH1 independently of its E3 ligase activity. Interacts with the N-terminal CARD domains of RIGI and IFIH1 and competes with the downstream adapter MAVS. In Mus musculus (Mouse), this protein is E3 ubiquitin-protein ligase RNF123 (Rnf123).